Consider the following 241-residue polypeptide: Isoprenyl transferase (241 aa).

Aspartate 17 is a catalytic residue. Residue aspartate 17 coordinates Mg(2+). Residues 18–21 (GNGR), tryptophan 22, arginine 30, histidine 34, and 62–64 (STE) contribute to the substrate site. Asparagine 65 acts as the Proton acceptor in catalysis. Residues tryptophan 66, arginine 68, arginine 186, and 192 to 194 (RLS) each bind substrate. Glutamate 205 is a binding site for Mg(2+).

Belongs to the UPP synthase family. In terms of assembly, homodimer. Mg(2+) is required as a cofactor.

Its function is as follows. Catalyzes the condensation of isopentenyl diphosphate (IPP) with allylic pyrophosphates generating different type of terpenoids. This Leptospira interrogans serogroup Icterohaemorrhagiae serovar copenhageni (strain Fiocruz L1-130) protein is Isoprenyl transferase.